A 176-amino-acid chain; its full sequence is Thiol:disulfide interchange protein HelX (176 aa).

An N-terminal signal peptide occupies residues 1-19 (MAKPLMFLPLLVMAGFVGA). A Thioredoxin domain is found at 35-172 (ALAGKEAPAV…ITKKIDPLLA (138 aa)). An intrachain disulfide couples Cys75 to Cys78.

This sequence belongs to the thioredoxin family. DsbE subfamily.

The protein resides in the periplasm. Functionally, required for disulfide bond formation in some periplasmic proteins. Also acts as a disulfide oxidoreductase in cytochromes c biogenesis. The cysteines of apocytochromes c must be in the reduced state for covalent linkage between the two moieties to occur. The sequence is that of Thiol:disulfide interchange protein HelX (helX) from Rhodobacter capsulatus (strain ATCC BAA-309 / NBRC 16581 / SB1003).